Consider the following 166-residue polypeptide: SsrA-binding protein (166 aa).

The protein belongs to the SmpB family.

It is found in the cytoplasm. Functionally, required for rescue of stalled ribosomes mediated by trans-translation. Binds to transfer-messenger RNA (tmRNA), required for stable association of tmRNA with ribosomes. tmRNA and SmpB together mimic tRNA shape, replacing the anticodon stem-loop with SmpB. tmRNA is encoded by the ssrA gene; the 2 termini fold to resemble tRNA(Ala) and it encodes a 'tag peptide', a short internal open reading frame. During trans-translation Ala-aminoacylated tmRNA acts like a tRNA, entering the A-site of stalled ribosomes, displacing the stalled mRNA. The ribosome then switches to translate the ORF on the tmRNA; the nascent peptide is terminated with the 'tag peptide' encoded by the tmRNA and targeted for degradation. The ribosome is freed to recommence translation, which seems to be the essential function of trans-translation. The polypeptide is SsrA-binding protein (Parasynechococcus marenigrum (strain WH8102)).